A 305-amino-acid chain; its full sequence is Probable G-protein coupled receptor 141 (305 aa).

Over 1–22 (MPGHNTSRNSSCDPIVTPHLIS) the chain is Extracellular. Residues N5 and N9 are each glycosylated (N-linked (GlcNAc...) asparagine). Residues 23-43 (LYFIVLIGGLVGVISILFLLV) form a helical membrane-spanning segment. At 44–50 (KMNTRSV) the chain is on the cytoplasmic side. A helical membrane pass occupies residues 51–71 (TTMAVINLVVVHSVFLLTVPF). Residues 72–89 (RLTYLIKKTWMFGLPFCK) lie on the Extracellular side of the membrane. A helical membrane pass occupies residues 90-110 (FVSAMLHIHMYLTFLFYVVIL). Over 111–131 (VTRYLIFFKCKDKVEFYRKLH) the chain is Cytoplasmic. Residues 132-152 (AVAASAGMWTLVIVIVVPLVV) form a helical membrane-spanning segment. Over 153–183 (SRYGIHEEYNEEHCFKFHKELAYTYVKIINY) the chain is Extracellular. The chain crosses the membrane as a helical span at residues 184 to 204 (MIVIFVIAVAVILLVFQVFII). Topologically, residues 205-227 (MLMVQKLRHSLLSHQEFWAQLKN) are cytoplasmic. The helical transmembrane segment at 228–248 (LFFIGVILVCFLPYQFFRIYY) threads the bilayer. The Extracellular segment spans residues 249–267 (LNVVTHSNACNSKVAFYNE). A helical membrane pass occupies residues 268–288 (IFLSVTAISCYDLLLFVFGGS). At 289-305 (HWFKQKIIGLWNCVLCR) the chain is on the cytoplasmic side.

Belongs to the G-protein coupled receptor 1 family.

It localises to the cell membrane. In terms of biological role, orphan receptor. The chain is Probable G-protein coupled receptor 141 (GPR141) from Homo sapiens (Human).